The primary structure comprises 361 residues: Probable S-adenosylmethionine-dependent methyltransferase At5g38780 (361 aa).

Residues tyrosine 19, cysteine 64, asparagine 69, aspartate 106, leucine 107, serine 135, and phenylalanine 136 each contribute to the S-adenosyl-L-homocysteine site. Residues asparagine 174, glutamate 260, phenylalanine 262, and asparagine 263 each coordinate Mg(2+).

The protein belongs to the methyltransferase superfamily. Type-7 methyltransferase family. In terms of assembly, homodimer. Requires Mg(2+) as cofactor.

In Arabidopsis thaliana (Mouse-ear cress), this protein is Probable S-adenosylmethionine-dependent methyltransferase At5g38780.